Here is a 1935-residue protein sequence, read N- to C-terminus: Myosin-7 (1935 aa).

Positions 32-81 (DLKKDVFVPDDKQEFVKAKIVSREGGKVTAETEYGKTVTVKEDQVMQQNP) constitute a Myosin N-terminal SH3-like domain. The Myosin motor domain occupies 85 to 778 (DKIEDMAMLT…LLGLLEEMRD (694 aa)). The residue at position 129 (Lys129) is an N6,N6,N6-trimethyllysine. 178–185 (GESGAGKT) provides a ligand contact to ATP. Thr378 is subject to Phosphothreonine. Actin-binding regions lie at residues 655–677 (LNKL…IPNE) and 757–771 (KFGH…GLLG). The IQ domain occupies 781–810 (LSRIITRIQAQSRGVLARMEYKKLLERRDS). Residues 839-1935 (LLKSAEREKE…DIGTKGLNEE (1097 aa)) adopt a coiled-coil conformation. Residues Ser1137 and Ser1269 each carry the phosphoserine modification. At Thr1282 the chain carries Phosphothreonine. Tyr1308 is modified (phosphotyrosine). Thr1309 is modified (phosphothreonine). At Ser1510 the chain carries Phosphoserine. Thr1513 is modified (phosphothreonine). Residues 1907 to 1935 (EERADIAESQVNKLRAKSRDIGTKGLNEE) form a disordered region. Residues 1923 to 1935 (KSRDIGTKGLNEE) are compositionally biased toward basic and acidic residues.

Belongs to the TRAFAC class myosin-kinesin ATPase superfamily. Myosin family. Muscle myosin is a hexameric protein that consists of 2 heavy chain subunits (MHC), 2 alkali light chain subunits (MLC) and 2 regulatory light chain subunits (MLC-2). Interacts with ECPAS. Interacts (via C-terminus) with LRRC39. As to expression, both wild type and variant Gln-403 are detected in skeletal muscle (at protein level).

The protein resides in the cytoplasm. It localises to the myofibril. The protein localises to the sarcomere. Functionally, myosins are actin-based motor molecules with ATPase activity essential for muscle contraction. Forms regular bipolar thick filaments that, together with actin thin filaments, constitute the fundamental contractile unit of skeletal and cardiac muscle. The polypeptide is Myosin-7 (MYH7) (Homo sapiens (Human)).